We begin with the raw amino-acid sequence, 280 residues long: Ribosomal RNA small subunit methyltransferase I (280 aa).

Belongs to the methyltransferase superfamily. RsmI family.

The protein resides in the cytoplasm. The enzyme catalyses cytidine(1402) in 16S rRNA + S-adenosyl-L-methionine = 2'-O-methylcytidine(1402) in 16S rRNA + S-adenosyl-L-homocysteine + H(+). In terms of biological role, catalyzes the 2'-O-methylation of the ribose of cytidine 1402 (C1402) in 16S rRNA. The chain is Ribosomal RNA small subunit methyltransferase I from Rickettsia prowazekii (strain Madrid E).